The sequence spans 412 residues: Serine hydroxymethyltransferase 1 (412 aa).

(6S)-5,6,7,8-tetrahydrofolate is bound by residues leucine 116 and 120–122; that span reads GHL. N6-(pyridoxal phosphate)lysine is present on lysine 225.

It belongs to the SHMT family. As to quaternary structure, homodimer. Pyridoxal 5'-phosphate serves as cofactor.

The protein localises to the cytoplasm. The catalysed reaction is (6R)-5,10-methylene-5,6,7,8-tetrahydrofolate + glycine + H2O = (6S)-5,6,7,8-tetrahydrofolate + L-serine. Its pathway is one-carbon metabolism; tetrahydrofolate interconversion. The protein operates within amino-acid biosynthesis; glycine biosynthesis; glycine from L-serine: step 1/1. Functionally, catalyzes the reversible interconversion of serine and glycine with tetrahydrofolate (THF) serving as the one-carbon carrier. This reaction serves as the major source of one-carbon groups required for the biosynthesis of purines, thymidylate, methionine, and other important biomolecules. Also exhibits THF-independent aldolase activity toward beta-hydroxyamino acids, producing glycine and aldehydes, via a retro-aldol mechanism. This is Serine hydroxymethyltransferase 1 from Pseudomonas fluorescens (strain Pf0-1).